Here is an 844-residue protein sequence, read N- to C-terminus: Translation initiation factor IF-2 (844 aa).

A compositionally biased stretch (basic and acidic residues) spans 1–11 (MTEDVKADVPK). Disordered regions lie at residues 1-35 (MTEDVKADVPKKLSIQRRTKTTVSGTTTSGKSKAV) and 79-248 (RLEA…KGAA). Residues 21–33 (TTVSGTTTSGKSK) show a composition bias toward low complexity. The segment covering 79–161 (RLEAEKAATK…AAEEAKRYAE (83 aa)) has biased composition (basic and acidic residues). Residues 162-175 (ADDSDNESSSEDYS) are compositionally biased toward acidic residues. The segment covering 200–210 (RGKNKVAKAKK) has biased composition (basic residues). The span at 211 to 237 (GGRDDENSKNSKNERESNRKNQKDAKF) shows a compositional bias: basic and acidic residues. The tr-type G domain occupies 343–513 (TRAPVVTIMG…LLQSEVLELT (171 aa)). A G1 region spans residues 352–359 (GHVDHGKT). Residue 352–359 (GHVDHGKT) participates in GTP binding. Residues 377 to 381 (GITQH) form a G2 region. The segment at 399–402 (DTPG) is G3. Residues 399–403 (DTPGH) and 453–456 (NKID) contribute to the GTP site. The tract at residues 453 to 456 (NKID) is G4. The G5 stretch occupies residues 489-491 (SAK).

The protein belongs to the TRAFAC class translation factor GTPase superfamily. Classic translation factor GTPase family. IF-2 subfamily.

The protein resides in the cytoplasm. One of the essential components for the initiation of protein synthesis. Protects formylmethionyl-tRNA from spontaneous hydrolysis and promotes its binding to the 30S ribosomal subunits. Also involved in the hydrolysis of GTP during the formation of the 70S ribosomal complex. This Haemophilus influenzae (strain PittGG) protein is Translation initiation factor IF-2.